We begin with the raw amino-acid sequence, 274 residues long: HMP-PP phosphatase (274 aa).

Asp-8 (nucleophile) is an active-site residue. Positions 8, 10, and 213 each coordinate Mg(2+).

The protein belongs to the HAD-like hydrolase superfamily. Cof family. The cofactor is Mg(2+).

It catalyses the reaction 4-amino-2-methyl-5-(diphosphooxymethyl)pyrimidine + H2O = 4-amino-2-methyl-5-(phosphooxymethyl)pyrimidine + phosphate + H(+). In terms of biological role, catalyzes the hydrolysis of 4-amino-2-methyl-5-hydroxymethylpyrimidine pyrophosphate (HMP-PP) to 4-amino-2-methyl-5-hydroxymethylpyrimidine phosphate (HMP-P). The chain is HMP-PP phosphatase from Serratia proteamaculans (strain 568).